The following is a 203-amino-acid chain: Dephospho-CoA kinase (203 aa).

Positions 4–201 constitute a DPCK domain; it reads IIGLTGGIGS…RKYLMLARKH (198 aa). 12–17 is an ATP binding site; that stretch reads GSGKTR.

It belongs to the CoaE family.

The protein localises to the cytoplasm. It carries out the reaction 3'-dephospho-CoA + ATP = ADP + CoA + H(+). It participates in cofactor biosynthesis; coenzyme A biosynthesis; CoA from (R)-pantothenate: step 5/5. Its function is as follows. Catalyzes the phosphorylation of the 3'-hydroxyl group of dephosphocoenzyme A to form coenzyme A. This Nitrosomonas europaea (strain ATCC 19718 / CIP 103999 / KCTC 2705 / NBRC 14298) protein is Dephospho-CoA kinase.